The primary structure comprises 741 residues: Probable basic-leucine zipper transcription factor I (741 aa).

Residues Gln77–Gln117 are a coiled coil. Composition is skewed to low complexity over residues Gln153–Gln164, Pro172–Lys237, Ile277–Lys290, and Gln381–Gln390. Disordered stretches follow at residues Gln153–Lys237, Ile277–Met305, and Lys349–Gln390. A bZIP domain is found at Glu429 to Lys492. Positions Lys431–Lys432 are basic motif. Residues Ile434–Ile441 form a leucine-zipper region.

It belongs to the bZIP family.

It is found in the nucleus. Its function is as follows. Probable transcriptional regulator. The sequence is that of Probable basic-leucine zipper transcription factor I (bzpI) from Dictyostelium discoideum (Social amoeba).